A 1035-amino-acid polypeptide reads, in one-letter code: NACHT, LRR and PYD domains-containing protein 3 (1035 aa).

The 93-residue stretch at 1–93 (MKMMSVRCKL…WEKAKKDQPE (93 aa)) folds into the Pyrin domain. A Phosphoserine modification is found at S5. Cysteines 8 and 106 form a disulfide. The residue at position 13 (Y13) is a Phosphotyrosine. A lipid anchor (S-palmitoyl cysteine) is attached at C128. The segment at 129 to 132 (KKKK) is required for binding to phosphatidylinositol 4-phosphate (PtdIns4P). Y134 and Y138 each carry phosphotyrosine. Residues 138–208 (YRRHVRSRFY…SSLKLELLFE (71 aa)) enclose the FISNA domain. Residue S159 is modified to Phosphoserine. The residue at position 166 (Y166) is a Phosphotyrosine. Position 167 (T167) interacts with ATP. Phosphoserine is present on S199. An NACHT domain is found at 218 to 534 (HTVVFQGAAG…EFFAAMYYLL (317 aa)). 224–231 (GAAGIGKT) is a binding site for ATP. 2 positions are modified to phosphoserine: S263 and S293. A Glycyl lysine isopeptide (Lys-Gly) (interchain with G-Cter in ubiquitin) cross-link involves residue K322. S332 carries the phosphoserine modification. A KFERQ-like motif 1 motif is present at residues 353–357 (LEKLQ). K428 is covalently cross-linked (Glycyl lysine isopeptide (Lys-Gly) (interchain with G-Cter in ubiquitin)). H520 is an ATP binding site. The KFERQ-like motif 2 signature appears at 603 to 607 (QVRLE). A Glycyl lysine isopeptide (Lys-Gly) (interchain with G-Cter in ubiquitin) cross-link involves residue K689. Phosphoserine is present on residues S727 and S734. LRR repeat units follow at residues 741–761 (SLTE…RVLC), 770–791 (NIQR…NISS), 798–818 (KLVE…RLLC), 827–848 (NLQK…DLAL), and 855–875 (SLTR…QVLC). Residues 797–801 (QKLVE) carry the KFERQ-like motif 3 motif. S805 carries the phosphoserine modification. S-palmitoyl cysteine attachment occurs at residues C836, C837, and C843. Residue Y860 is modified to Phosphotyrosine. K877 participates in a covalent cross-link: Glycyl lysine isopeptide (Lys-Gly) (interchain with G-Cter in ubiquitin). LRR repeat units follow at residues 884-905 (NLQK…ALTS), 912-932 (NLTH…KLLC), 941-962 (KLQM…DLST), and 969-990 (SLRK…TLCE). C957 carries the S-palmitoyl cysteine lipid modification. K972 is covalently cross-linked (Glycyl lysine isopeptide (Lys-Gly) (interchain with G-Cter in ubiquitin)). The short motif at 990–994 (EVLKQ) is the KFERQ-like motif 4 element. S1034 is modified (phosphoserine).

It belongs to the NLRP family. As to quaternary structure, sensor component of NLRP3 inflammasomes; inflammasomes are supramolecular complexes that assemble in the cytosol in response to pathogens and other damage-associated signals and play critical roles in innate immunity and inflammation. The core of NLRP3 inflammasomes consists of a signal sensor component (NLRP3), an adapter (PYCARD/ASC), which recruits an effector pro-inflammatory caspase (CASP1 and, possibly, CASP4 and CASP5). Homodecamer; inactive NLRP3 forms homodecameric double-ring cages that hide pyrin domains within NACHT-LRR rings to avoid premature activation. Interacts (via pyrin domain) with PYCARD/ASC (via pyrin domain); interaction is direct. Interacts (via LRR repeat domain) with NEK7 (via N-terminus); the interaction is required for the formation of the complex NLRP3:PYCARD, oligomerization of PYCARD/ASC and activation of CASP1. Interacts (via LRR repeat domain) with NR4A1/Nur77 (via N-terminus); the interaction is direct, requires activation of NR4A1 by its ligands NBRE-containing dsDNA and lipopolysaccharide, and stimulates the association of NLRP3 with NEK7 for non-canonical NLRP3 inflammasome activation. Interacts with CARD8; leading to inhibit formation of the NLRP3 inflammasome. Interacts with MEFV; this interaction targets NLRP3 to degradation by autophagy, hence preventing excessive IL1B- and IL18-mediated inflammation. Interacts with EIF2AK2/PKR; this interaction requires EIF2AK2 activity, is accompanied by EIF2AK2 autophosphorylation and promotes inflammasome assembly in response to specific stimuli. Interacts with GBP5 (via DAPIN domain); this interaction promotes inflammasome assembly in response to microbial and soluble, but not crystalline, agents. Interacts with PML (isoform PML-1) (via the leucine-rich repeat (LRR) domain); PML-mediated increase in NLRP3 inflammasome activation does not depend upon this interaction. Interacts (via NACHT domain) with DHX33 (via DEAH box); NLRP3 activation in presence of cytosolic dsRNA is mediated by DHX33. Interacts (via NACHT and LRR domains) with ARRB2; this interaction is direct and inducible by polyunsaturated fatty acids (PUFAs). Interacts (via NACHT domain) with DDX3X under both LPS-primed and inflammasome-activating conditions. Interacts with IRF4 (via the LRR domain); this interaction is direct and is required for optimal IRF4 binding to IL4 promoter and efficient IL4 transactivation during differentiation of Th2 helper T-cells. Interacts with MAVS; promoting localization to mitochondria and activation of the NLRP3 inflammasome. Interacts with MARK4; promoting localization of NLRP3 to the microtubule organizing center (MTOC). Interacts with TRIM50; this interaction also promotes NLRP3 oligomerization and subsequent inflammasome activation. Interacts with IRGM; preventing NLRP3 inflammasome assembly and promoting NLRP3 degradation. Interacts (via NACHT and LLR domains) with ABHD8; this interaction is enhanced in the presence of NLRP3 inflammasome inducers, such as ATP, nigericin, silica, or alum. Interaction with ABHD8 leads the recruitment of ZDHHC12, hence facilitating NLRP3 palmitoylation and degradation by the chaperone-mediated autophagy pathway (CMA), therefore attenuating NLRP3 inflammasome activation. In terms of processing, phosphorylation by MAPK8/JNK1 increases inflammasome activation by promoting deubiquitination by BRCC3 and NLRP3 homooligomerization. Phosphorylation at Ser-805 by CSNK1A1 prevents inflammasome activation by preventing NEK7 recruitment. Phosphorylation at Ser-5 in the pyrin domain inhibits homomultimerization of NLRP3 and activation of the NLRP3 inflammasome: dephosphorylation by protein phosphatase 2A (PP2A) promotes assembly of the NLRP3 inflammasome. Phosphorylation at Ser-293 by PKD/PRKD1 promotes NLRP3 inflammasome assembly. Phosphorylation by ERK1/MAPK3 promotes NLRP3 inflammasome assembly. Phosphorylation by BTK (at Tyr-134, Tyr-138 and Tyr-166) in the region that mediates binding to phosphatidylinositol phosphate, promotes relocalization of NLRP3 and assembly of the NLRP3 inflammasome. Phosphorylation at Tyr-860 inhibits NLRP3 inflammasome assembly: dephosphorylation by PTPN22 promotes inflammasome activation. Phosphorylated by LATS1 and LATS2 at Ser-263 following palmitoylation by ZDHHC1, promoting its relocalization to the microtubule organizing center (MTOC), where NLRP3 is activated by NEK7, leading to inflammasome assembly and activation. Post-translationally, ubiquitinated; undergoes both 'Lys-48'- and 'Lys-63'-linked polyubiquitination. Ubiquitination does not lead to degradation, but inhibits inflammasome activation. Deubiquitination is catalyzed by BRCC3 and associated with NLRP3 activation and inflammasome assembly. This process can be induced by the activation of Toll-like receptors (by LPS), through a non-transcriptional pathway dependent on the mitochondrial production of reactive oxygen species, and by ATP. Ubiquitinated by TRIM31 via 'Lys-48'-linked ubiquitination, leading to its degradation by the proteasome. Ubiquitinated at Lys-689 by the SCF(FBXL2) complex, leading to its degradation by the proteasome. Ubiquitinated by TRIM35 via 'lys-48' and 'Lys-63'-linked ubiquitination leading to inhibition of NLRP3 inflammasome activation. Undergoes 'Lys-27'-linked polyubiquitination by MARCHF5, leading to NLRP3-NEK7 complex formation and NLRP3 oligomerization. The disulfide bond in the pyrin domain might play a role in reactive oxygen species-mediated activation. In terms of processing, palmitoylation by ZDHHC12 promotes NLRP3 degradation by the chaperone-mediated autophagy pathway (CMA) and therefore limits NLRP3 inflammasome activation. Interaction with ZDHHC12, and hence NLRP3 palmitoylation, is greatly enhanced by ABHD8. Following palmitoylation, HSPA8/HSC70 recognizes and binds the KFERQ-like motifs on NLRP3 and promotes NLRP3 recruitment to lysosomes, where it is degraded via the chaperone-mediated autophagy pathway in a LAMP2-dependent process. Palmitoylation at Cys-836 and Cys-837 by ZDHHC5 enhances its binding to NEK7 leading to inflammasome assembly and activation. Palmitoylation at Cys-128 and Cys-957 by ZDHHC1 facilitates phosphorylation at Ser-263 by LATS1 and LATS2, promoting its relocalization to the microtubule organizing center (MTOC), where NLRP3 is activated by NEK7, leading to inflammasome assembly and activation. Depalmitoylated by ABHD17A. Post-translationally, degraded via selective autophagy following interaction with IRGM. IRGM promotes NLRP3 recruitment to autophagosome membranes, promoting its SQSTM1/p62-dependent autophagy-dependent degradation.

It localises to the cytoplasm. The protein resides in the cytosol. The protein localises to the inflammasome. It is found in the cytoskeleton. Its subcellular location is the microtubule organizing center. It localises to the golgi apparatus membrane. The protein resides in the endoplasmic reticulum. The protein localises to the mitochondrion. It is found in the secreted. Its subcellular location is the nucleus. The catalysed reaction is ATP + H2O = ADP + phosphate + H(+). Its activity is regulated as follows. Under resting conditions, NLRP3 binds ADP and is autoinhibited. Inactive NLRP3 forms homodecameric double-ring cages that hide pyrin domains within NACHT-LRR rings to avoid premature activation. NLRP3 activation stimuli include extracellular ATP, nigericin, reactive oxygen species, crystals of monosodium urate or cholesterol, amyloid-beta fibers, environmental or industrial particles and nanoparticles, such as asbestos, silica, aluminum salts, cytosolic dsRNA, etc. Almost all stimuli trigger intracellular K(+) efflux. These stimuli lead to membrane perturbations that induce activation of NLRP3. Upon activation, NLRP3 is transported to microtubule organizing center (MTOC), where it is unlocked by NEK7, leading to its relocalization to dispersed trans-Golgi network (dTGN) vesicle membranes and recruitment of PYCARD/ASC for the formation of an active inflammasome complex. NEK7-activated NLRP3 forms a disk-shaped inflammasome. NLRP3 and PYCARD/ASC interact via their respective pyrin domains; interaction initiates speck formation (nucleation) which greatly enhances further addition of soluble PYCARD/ASC molecules to the speck in a prion-like polymerization process. Clustered PYCARD/ASC nucleates the formation of CASP1 filaments through the interaction of their respective CARD domains, acting as a platform for CASP1 polymerization and activation. Active CASP1 then processes IL1B and IL18 precursors, leading to the release of mature cytokines in the extracellular milieu and inflammatory response. NLRP3 inflammasome assembly is inhibited by IRGM, which impedes NLRP3 oligomerization. NLRP3 inflammasome is inhibited by cyclic AMP (cAMP), which directly binds NLRP3; inhibition is relieved by calcium-sensing receptor CASR, which inhibits production of cAMP. Specifically inhibited by sulfonylurea MCC950 (also named CP-456,773, CRID3), a potent and specific small-molecule inhibitor of the NLRP3 inflammasome that acts by preventing ATP hydrolysis. In terms of biological role, sensor component of the NLRP3 inflammasome, which mediates inflammasome activation in response to defects in membrane integrity, leading to secretion of inflammatory cytokines IL1B and IL18 and pyroptosis. In response to pathogens and other damage-associated signals that affect the integrity of membranes, initiates the formation of the inflammasome polymeric complex composed of NLRP3, CASP1 and PYCARD/ASC. Recruitment of pro-caspase-1 (proCASP1) to the NLRP3 inflammasome promotes caspase-1 (CASP1) activation, which subsequently cleaves and activates inflammatory cytokines IL1B and IL18 and gasdermin-D (GSDMD), promoting cytokine secretion and pyroptosis. Activation of NLRP3 inflammasome is also required for HMGB1 secretion; stimulating inflammatory responses. Under resting conditions, ADP-bound NLRP3 is autoinhibited. NLRP3 activation stimuli include extracellular ATP, nigericin, reactive oxygen species, crystals of monosodium urate or cholesterol, amyloid-beta fibers, environmental or industrial particles and nanoparticles, such as asbestos, silica, aluminum salts, cytosolic dsRNA, etc. Almost all stimuli trigger intracellular K(+) efflux. These stimuli lead to membrane perturbation and activation of NLRP3. Upon activation, NLRP3 is transported to microtubule organizing center (MTOC), where it is unlocked by NEK7, leading to its relocalization to dispersed trans-Golgi network (dTGN) vesicle membranes and formation of an active inflammasome complex. Associates with dTGN vesicle membranes by binding to phosphatidylinositol 4-phosphate (PtdIns4P). Shows ATPase activity. Independently of inflammasome activation, regulates the differentiation of T helper 2 (Th2) cells and has a role in Th2 cell-dependent asthma and tumor growth. During Th2 differentiation, required for optimal IRF4 binding to IL4 promoter and for IRF4-dependent IL4 transcription. Binds to the consensus DNA sequence 5'-GRRGGNRGAG-3'. May also participate in the transcription of IL5, IL13, GATA3, CCR3, CCR4 and MAF. The sequence is that of NACHT, LRR and PYD domains-containing protein 3 from Rattus norvegicus (Rat).